Here is a 416-residue protein sequence, read N- to C-terminus: Lipase A (416 aa).

Residues 1–32 (MRLAPQKPLLLSTVLHLLLSIWMLGFASLAGA) form the signal peptide. 2 cysteine pairs are disulfide-bonded: Cys67–Cys391 and Cys177–Cys180. Residue Asn179 is glycosylated (N-linked (GlcNAc...) asparagine). Catalysis depends on Ser219, which acts as the Nucleophile. Residues Asp287 and His381 each act as charge relay system in the active site.

It belongs to the AB hydrolase superfamily. Lipase family. In terms of processing, glycosylated.

It localises to the secreted. The enzyme catalyses Deacetylation of xylans and xylo-oligosaccharides.. It catalyses the reaction a triacylglycerol + H2O = a diacylglycerol + a fatty acid + H(+). Functionally, lipolytic enzyme that possesses both lipase and acetylxylan esterase activity. Active towards p-nitrophenol esters of various carbon chain length with preference for medium-chain fatty acids (C-8). Also highly active on the acetylated compounds xylose tetra-acetate and oat spelt xylan. This chain is Lipase A, found in Sodiomyces alcalophilus (Acremonium alcalophilum).